We begin with the raw amino-acid sequence, 2178 residues long: Streptococcal hemagglutinin (2178 aa).

An N-terminal signal peptide occupies residues 1 to 90 (MFFKRQKGQY…AVVTSSSVYA (90 aa)). The interval 91-137 (EEEQALEKVIDTRDVLATRGEAVLSEEAATTLSSEGANPVESLSDTL) is non-repeat region 1 (NR1). Residues 138-219 (SASESASANS…SLISSDSSNS (82 aa)) are ser-rich region 1 (SR1). The span at 192–244 (TSQSFSSTTSSTQSSNNESLISSDSSNSLNTNQSVSARNQNARVRTRRAVAAN) shows a compositional bias: low complexity. Disordered regions lie at residues 192–246 (TSQS…ANDT), 495–557 (VSAS…SVSA), 584–653 (SAST…SVSA), 836–857 (SAST…SVSA), 884–917 (SAST…SVSA), 944–993 (SAST…SESA), 1020–1289 (SASV…SVSA), 1341–1390 (ASTS…ESAS), 1488–1685 (SASV…SVSA), 1725–1901 (ASTS…SAST), and 2119–2151 (LSQS…GESE). The segment at 220-449 (LNTNQSVSAR…ANRVVKDLQI (230 aa)) is non-repeat region 2 (NR2). The ser-rich region 2 (SR2) stretch occupies residues 450-2143 (SKSNSASQSS…SMHDRISKGQ (1694 aa)). A compositionally biased stretch (low complexity) spans 2119 to 2130 (LSQSLSDSQSTS). The LPXTG sorting signal motif lies at 2144–2148 (LPRTG). The residue at position 2147 (threonine 2147) is a Pentaglycyl murein peptidoglycan amidated threonine. A propeptide spans 2148–2178 (GESESKASILALGIGALGLAFKKRKKNESED) (removed by sortase).

The protein belongs to the serine-rich repeat protein (SRRP) family. The protein is glycosylated in vivo; constructs without SR1 and SR2 are not glycosylated.

The protein localises to the secreted. It is found in the cell wall. A cell wall protein involved with PadA in host cell interactions required for colonization and pathogensis. Mediates hemagglutination and adherence to ghst glycoproteins. Recognizes fetuin-A (AHSG), a highly glycosylated human plasma protein, also involved in recognition of human platelets, probably via platelet glycoprotein Ib alpha (GP1BA). Acts in concert with PadA to promote binding to glycosylated human fibronectin (FN1) and vitronectin (VTN), and biofilm formation. Plays a major role in fibronectin and vitronectin binding; binding is mediated by glycosylated regions. Probably mediates interaction of PadA with resting platelets. The polypeptide is Streptococcal hemagglutinin (Streptococcus gordonii (strain Challis / ATCC 35105 / BCRC 15272 / CH1 / DL1 / V288)).